The chain runs to 384 residues: MAP kinase-activated protein kinase 3 (384 aa).

Methionine 1 carries the N-acetylmethionine modification. The tract at residues 1–22 is disordered; sequence MDVETAEEQGGPAPPSGVPCGP. The Protein kinase domain occupies 46–306; that stretch reads QLSKQVLGLG…ITQFMNHPWI (261 aa). ATP-binding positions include 52-60 and lysine 75; that span reads LGLGVNGKV. Aspartate 168 acts as the Proton acceptor in catalysis. A Phosphothreonine; by MAPK14 modification is found at threonine 203. A Phosphoserine; by MAPK14 modification is found at serine 253. Phosphoserine; by autocatalysis is present on serine 309. The segment at 309–345 is autoinhibitory helix; that stretch reads SMVVPQTPLHTARVLQEDRDHWDEVKEEMTSALATMR. The residue at position 315 (threonine 315) is a Phosphothreonine; by MAPK14. A Nuclear export signal (NES) motif is present at residues 337 to 346; it reads MTSALATMRV. Residues 347–371 form a p38 MAPK-binding site region; it reads DYDQVKIKDLKTSNNRLLNKRRKKQ. 2 consecutive short sequence motifs (bipartite nuclear localization signal) follow at residues 352–355 and 366–370; these read KIKD and KRRKK. The interval 359–384 is disordered; the sequence is SNNRLLNKRRKKQAGSSSGSQGCNNQ. Low complexity predominate over residues 373 to 384; that stretch reads GSSSGSQGCNNQ.

Belongs to the protein kinase superfamily. CAMK Ser/Thr protein kinase family. As to quaternary structure, heterodimer with p38-alpha/MAPK14. The heterodimer with p38-alpha/MAPK14 forms a stable complex: molecules are positioned 'face to face' so that the ATP-binding sites of both kinases are at the heterodimer interface. Interacts with TCF3 and with polycomb proteins, such as PCH2 and BMI1/PCGF4. Post-translationally, phosphorylated and activated by MAPK1/ERK2 and MAPK3/ERK1. Phosphorylated and activated by MAP kinase p38-alpha/MAPK14 at Thr-203, Ser-253 and Thr-315.

The protein resides in the nucleus. The protein localises to the cytoplasm. The enzyme catalyses L-seryl-[protein] + ATP = O-phospho-L-seryl-[protein] + ADP + H(+). It carries out the reaction L-threonyl-[protein] + ATP = O-phospho-L-threonyl-[protein] + ADP + H(+). Its activity is regulated as follows. Activated following phosphorylation by p38-alpha/MAPK14 following various stresses. Inhibited by ligand 5B (2'-[2-(1,3-benzodioxol-5-yl)pyrimidin-4-yl]-5',6'-dihydrospiro[piperidine-4,7'-pyrrolo[3,2-c]pyridin]- 4'(1'h)-one) and ligand P4O (2-[2-(2-fluorophenyl)pyridin-4-yl]-1,5,6,7-tetrahydro- 4h-pyrrolo[3,2-c]pyridin-4-one), 2 ATP-competitive inhibitors. In terms of biological role, stress-activated serine/threonine-protein kinase involved in cytokines production, endocytosis, cell migration, chromatin remodeling and transcriptional regulation. Following stress, it is phosphorylated and activated by MAP kinase p38-alpha/MAPK14, leading to phosphorylation of substrates. Phosphorylates serine in the peptide sequence, Hyd-X-R-X(2)-S, where Hyd is a large hydrophobic residue. MAPKAPK2 and MAPKAPK3, share the same function and substrate specificity, but MAPKAPK3 kinase activity and level in protein expression are lower compared to MAPKAPK2. Phosphorylates HSP27/HSPB1, KRT18, KRT20, RCSD1, RPS6KA3, TAB3 and TTP/ZFP36. Mediates phosphorylation of HSP27/HSPB1 in response to stress, leading to dissociate HSP27/HSPB1 from large small heat-shock protein (sHsps) oligomers and impair their chaperone activities and ability to protect against oxidative stress effectively. Involved in inflammatory response by regulating tumor necrosis factor (TNF) and IL6 production post-transcriptionally: acts by phosphorylating AU-rich elements (AREs)-binding proteins, such as TTP/ZFP36, leading to regulate the stability and translation of TNF and IL6 mRNAs. Phosphorylation of TTP/ZFP36, a major post-transcriptional regulator of TNF, promotes its binding to 14-3-3 proteins and reduces its ARE mRNA affinity leading to inhibition of dependent degradation of ARE-containing transcript. Involved in toll-like receptor signaling pathway (TLR) in dendritic cells: required for acute TLR-induced macropinocytosis by phosphorylating and activating RPS6KA3. Also acts as a modulator of Polycomb-mediated repression. This is MAP kinase-activated protein kinase 3 (MAPKAPK3) from Bos taurus (Bovine).